Here is a 209-residue protein sequence, read N- to C-terminus: MARNLDPKCRQCRREGEKLFLKGEKCFTDKCAIERRSYAPGQHGQKSGARLSDYGVHLRAKQKIRRVYGVLEGQFRKTFAEADRRKGQTGENLLQLLEARLDSVAYRMGFGASRSESRQVVRHNGILVNGKRVNIPSFIVKPGDVVQLTDRARASLRCKAALEAAESRGFPEWISVDVKEGKGTFKAMPQRSELPATLNEGLVIELYSK.

Residues Ala99–Ala160 form the S4 RNA-binding domain.

It belongs to the universal ribosomal protein uS4 family. Part of the 30S ribosomal subunit. Contacts protein S5. The interaction surface between S4 and S5 is involved in control of translational fidelity.

Functionally, one of the primary rRNA binding proteins, it binds directly to 16S rRNA where it nucleates assembly of the body of the 30S subunit. Its function is as follows. With S5 and S12 plays an important role in translational accuracy. The polypeptide is Small ribosomal subunit protein uS4 (Dechloromonas aromatica (strain RCB)).